Reading from the N-terminus, the 839-residue chain is Putative AC9 transposase (839 aa).

The segment covering 32 to 43 has biased composition (polar residues); that stretch reads SSSNANGTATDP. Residues 32 to 85 form a disordered region; it reads SSSNANGTATDPSQDDMAIVHEPQPQPQPQPEPQPQPQPEPEEEAPQKRAKKCT. The span at 55–70 shows a compositional bias: pro residues; the sequence is QPQPQPQPEPQPQPQP.

The protein is Putative AC9 transposase of Zea mays (Maize).